A 603-amino-acid chain; its full sequence is uncharacterized protein (603 aa).

Positions 496–513 (EEEDQEEDDTSDDDDQEK) are enriched in acidic residues. 2 disordered regions span residues 496–536 (EEED…GSLE) and 549–568 (AVAEQDRKKTQKKHKIDTAQ). Positions 517–533 (NPQNNIGSLTRTPSSPG) are enriched in polar residues.

The protein belongs to the herpesviridae US22 family.

This is an uncharacterized protein from Human cytomegalovirus (strain AD169) (HHV-5).